A 368-amino-acid chain; its full sequence is Flagellar P-ring protein (368 aa).

The signal sequence occupies residues 1–24 (MNSIFRKIVFAAFLLLALPQFALA).

The protein belongs to the FlgI family. In terms of assembly, the basal body constitutes a major portion of the flagellar organelle and consists of four rings (L,P,S, and M) mounted on a central rod.

It is found in the periplasm. Its subcellular location is the bacterial flagellum basal body. In terms of biological role, assembles around the rod to form the L-ring and probably protects the motor/basal body from shearing forces during rotation. The polypeptide is Flagellar P-ring protein (Geotalea uraniireducens (strain Rf4) (Geobacter uraniireducens)).